A 269-amino-acid chain; its full sequence is JmjC domain-containing protein 8 (269 aa).

Residues Met1 to Pro24 form the signal peptide. 3 N-linked (GlcNAc...) asparagine glycosylation sites follow: Asn135, Asn145, and Asn214. One can recognise a JmjC domain in the interval Thr147–Gly269.

Oligomer. Dimer. Interacts with PKM; regulates angiogenesis and metabolism. In terms of processing, N-glycosylated.

The protein resides in the endoplasmic reticulum lumen. It localises to the cytoplasm. Functionally, functions as a positive regulator of TNF-induced NF-kappaB signaling. Regulates angiogenesis and cellular metabolism through interaction with PKM. The chain is JmjC domain-containing protein 8 from Rattus norvegicus (Rat).